Reading from the N-terminus, the 1369-residue chain is Xanthine dehydrogenase (1369 aa).

The 2Fe-2S ferredoxin-type domain occupies 20–106 (GEAVVYVNGV…GMHIITVEGI (87 aa)). 8 residues coordinate [2Fe-2S] cluster: Cys-58, Cys-63, Cys-66, Cys-88, Cys-128, Cys-131, Cys-164, and Cys-166. The 186-residue stretch at 265-450 (NGFNGIRWYR…LSVILPWTRP (186 aa)) folds into the FAD-binding PCMH-type domain. Residues 293 to 300 (LIIGNSEV), Phe-373, 383 to 387 (SVGGN), Asp-396, Leu-440, and Lys-458 each bind FAD. Positions 804 and 835 each coordinate Mo-molybdopterin. Positions 839 and 917 each coordinate substrate. A Mo-molybdopterin-binding site is contributed by Arg-949. Substrate contacts are provided by Phe-951 and Thr-1047. Ala-1116 contacts Mo-molybdopterin. Catalysis depends on Glu-1305, which acts as the Proton acceptor.

The protein belongs to the xanthine dehydrogenase family. In terms of assembly, homodimer. The cofactor is [2Fe-2S] cluster. Requires FAD as cofactor. Mo-molybdopterin is required as a cofactor.

It carries out the reaction xanthine + NAD(+) + H2O = urate + NADH + H(+). The catalysed reaction is hypoxanthine + NAD(+) + H2O = xanthine + NADH + H(+). Key enzyme involved in purine catabolism. Catalyzes the oxidation of hypoxanthine to xanthine and the oxidation of xanthine to urate. This chain is Xanthine dehydrogenase (XDH), found in Oryza sativa subsp. japonica (Rice).